We begin with the raw amino-acid sequence, 156 residues long: E3 ubiquitin-protein ligase RNF181 (156 aa).

The RING-type; atypical zinc-finger motif lies at 79–120 (CPVCLLEFEEGETVRQLPCEHLFHSSCILPWLGKTNSCPLCR).

It belongs to the RNF181 family.

It carries out the reaction S-ubiquitinyl-[E2 ubiquitin-conjugating enzyme]-L-cysteine + [acceptor protein]-L-lysine = [E2 ubiquitin-conjugating enzyme]-L-cysteine + N(6)-ubiquitinyl-[acceptor protein]-L-lysine.. It participates in protein modification; protein ubiquitination. Functionally, E3 ubiquitin-protein ligase which accepts ubiquitin from an E2 ubiquitin-conjugating enzyme in the form of a thioester and then directly transfers the ubiquitin to targeted substrates. Catalyzes monoubiquitination of 26S proteasome subunit PSMC2/RPT1. The sequence is that of E3 ubiquitin-protein ligase RNF181 (rnf181) from Xenopus tropicalis (Western clawed frog).